Here is a 179-residue protein sequence, read N- to C-terminus: Adenine phosphoribosyltransferase (179 aa).

Belongs to the purine/pyrimidine phosphoribosyltransferase family. As to quaternary structure, homodimer.

It is found in the cytoplasm. It carries out the reaction AMP + diphosphate = 5-phospho-alpha-D-ribose 1-diphosphate + adenine. It functions in the pathway purine metabolism; AMP biosynthesis via salvage pathway; AMP from adenine: step 1/1. In terms of biological role, catalyzes a salvage reaction resulting in the formation of AMP, that is energically less costly than de novo synthesis. This chain is Adenine phosphoribosyltransferase, found in Actinobacillus pleuropneumoniae serotype 5b (strain L20).